The sequence spans 119 residues: Large ribosomal subunit protein uL18 (119 aa).

It belongs to the universal ribosomal protein uL18 family. As to quaternary structure, part of the 50S ribosomal subunit; part of the 5S rRNA/L5/L18/L25 subcomplex. Contacts the 5S and 23S rRNAs.

Functionally, this is one of the proteins that bind and probably mediate the attachment of the 5S RNA into the large ribosomal subunit, where it forms part of the central protuberance. The chain is Large ribosomal subunit protein uL18 from Xanthomonas campestris pv. campestris (strain 8004).